Here is a 391-residue protein sequence, read N- to C-terminus: Saxitoxin and tetrodotoxin-binding protein 2 (391 aa).

The N-terminal stretch at 1–20 is a signal peptide; it reads MGAVPGVVLLLMLAVLGIRA. Tandem repeats lie at residues 24–202 and 203–391. N-linked (GlcNAc...) asparagine glycosylation is found at Asn41, Asn54, Asn63, Asn97, Asn234, Asn268, Asn277, and Asn307.

As to quaternary structure, homodimer or heterodimer of PSTBP1 and PSTBP2. Post-translationally, glycosylated.

Its subcellular location is the secreted. Binds both saxitoxin and tetradotoxin. May play a role in toxin accumulation and/or excretion. The chain is Saxitoxin and tetrodotoxin-binding protein 2 (psbp2) from Takifugu pardalis (Panther puffer).